Reading from the N-terminus, the 123-residue chain is Large-conductance mechanosensitive channel (123 aa).

Helical transmembrane passes span 14–34 (VLDLAVGVIIGSAFTGLVTSL) and 67–87 (GNFINDVLNFLIIAFVVFLLV).

The protein belongs to the MscL family. In terms of assembly, homopentamer.

The protein resides in the cell membrane. Functionally, channel that opens in response to stretch forces in the membrane lipid bilayer. May participate in the regulation of osmotic pressure changes within the cell. In Lacticaseibacillus casei (strain BL23) (Lactobacillus casei), this protein is Large-conductance mechanosensitive channel.